Here is a 95-residue protein sequence, read N- to C-terminus: Protein K6 (95 aa).

Positions Met-1–Ser-24 are cleaved as a signal peptide.

The sequence is that of Protein K6 (K6) from Human herpesvirus 8 type P (isolate GK18) (HHV-8).